We begin with the raw amino-acid sequence, 85 residues long: UPF0297 protein CHY_0540 (85 aa).

The protein belongs to the UPF0297 family.

The protein is UPF0297 protein CHY_0540 of Carboxydothermus hydrogenoformans (strain ATCC BAA-161 / DSM 6008 / Z-2901).